We begin with the raw amino-acid sequence, 108 residues long: Ig kappa chain V-V region MOPC 173 (108 aa).

The tract at residues 1–23 (DIQMTQTTSSLSASLGDRVTISC) is framework-1. C23 and C88 are oxidised to a cystine. The segment at 24–34 (SASQSIGNYLB) is complementarity-determining-1. The interval 35–49 (WYQQKPDGTVKLLIY) is framework-2. The tract at residues 50-56 (YTSSLHS) is complementarity-determining-2. Residues 57–88 (GVPSRFSGSGSGTDYSLTISBLZPZBIATYYC) form a framework-3 region. Residues 89 to 97 (QQYSKLPRT) are complementarity-determining-3. The framework-4 stretch occupies residues 98–108 (FGGGTKLEIKR).

In Mus musculus (Mouse), this protein is Ig kappa chain V-V region MOPC 173.